The chain runs to 249 residues: Tryptophan synthase alpha chain (249 aa).

Residues glutamate 43 and aspartate 54 each act as proton acceptor in the active site.

It belongs to the TrpA family. Tetramer of two alpha and two beta chains.

The enzyme catalyses (1S,2R)-1-C-(indol-3-yl)glycerol 3-phosphate + L-serine = D-glyceraldehyde 3-phosphate + L-tryptophan + H2O. Its pathway is amino-acid biosynthesis; L-tryptophan biosynthesis; L-tryptophan from chorismate: step 5/5. In terms of biological role, the alpha subunit is responsible for the aldol cleavage of indoleglycerol phosphate to indole and glyceraldehyde 3-phosphate. In Campylobacter jejuni subsp. jejuni serotype O:6 (strain 81116 / NCTC 11828), this protein is Tryptophan synthase alpha chain.